The primary structure comprises 422 residues: N-acylglucosamine 2-epimerase (422 aa).

Residues 185-206 (LLNLVEQLGEADEELAGISAEL) are leucine-zipper.

Belongs to the N-acylglucosamine 2-epimerase family. As to quaternary structure, homodimer. Forms a heterodimer with renin and inhibits its activity.

It carries out the reaction an N-acyl-D-glucosamine = an N-acyl-D-mannosamine. The protein operates within amino-sugar metabolism; N-acetylneuraminate degradation. Its function is as follows. Catalyzes the interconversion of N-acetylglucosamine to N-acetylmannosamine. Involved in the N-glycolylneuraminic acid (Neu5Gc) degradation pathway. The sequence is that of N-acylglucosamine 2-epimerase (RENBP) from Bos taurus (Bovine).